The sequence spans 382 residues: Pyrimidine monooxygenase RutA (382 aa).

FMN is bound by residues 68-69 (IK), Asn134, Glu143, 159-160 (RY), and Ser209.

Belongs to the NtaA/SnaA/DszA monooxygenase family. RutA subfamily.

It catalyses the reaction uracil + FMNH2 + NADH + O2 = (Z)-3-ureidoacrylate + FMN + NAD(+) + H2O + H(+). It carries out the reaction thymine + FMNH2 + NADH + O2 = (Z)-2-methylureidoacrylate + FMN + NAD(+) + H2O + H(+). Its function is as follows. Catalyzes the pyrimidine ring opening between N-3 and C-4 by an unusual flavin hydroperoxide-catalyzed mechanism, adding oxygen atoms in the process to yield ureidoacrylate peracid, that immediately reacts with FMN forming ureidoacrylate and FMN-N(5)-oxide. The FMN-N(5)-oxide reacts spontaneously with NADH to produce FMN. Requires the flavin reductase RutF to regenerate FMN in vivo. This Escherichia coli O55:H7 (strain CB9615 / EPEC) protein is Pyrimidine monooxygenase RutA.